The following is a 149-amino-acid chain: 6,7-dimethyl-8-ribityllumazine synthase (149 aa).

5-amino-6-(D-ribitylamino)uracil-binding positions include Phe22, 56-58 (ALE), and 80-82 (AVI). 85–86 (ET) is a binding site for (2S)-2-hydroxy-3-oxobutyl phosphate. The active-site Proton donor is the His88. Asn113 is a 5-amino-6-(D-ribitylamino)uracil binding site. Arg127 is a (2S)-2-hydroxy-3-oxobutyl phosphate binding site.

This sequence belongs to the DMRL synthase family.

It catalyses the reaction (2S)-2-hydroxy-3-oxobutyl phosphate + 5-amino-6-(D-ribitylamino)uracil = 6,7-dimethyl-8-(1-D-ribityl)lumazine + phosphate + 2 H2O + H(+). Its pathway is cofactor biosynthesis; riboflavin biosynthesis; riboflavin from 2-hydroxy-3-oxobutyl phosphate and 5-amino-6-(D-ribitylamino)uracil: step 1/2. In terms of biological role, catalyzes the formation of 6,7-dimethyl-8-ribityllumazine by condensation of 5-amino-6-(D-ribitylamino)uracil with 3,4-dihydroxy-2-butanone 4-phosphate. This is the penultimate step in the biosynthesis of riboflavin. The sequence is that of 6,7-dimethyl-8-ribityllumazine synthase from Methylobacillus flagellatus (strain ATCC 51484 / DSM 6875 / VKM B-1610 / KT).